Here is a 316-residue protein sequence, read N- to C-terminus: Ribosomal RNA small subunit methyltransferase H (316 aa).

S-adenosyl-L-methionine contacts are provided by residues 37–39, D56, F83, D106, and H113; that span reads GGH. The segment at 276–316 is disordered; sequence PILPSEEETKENPASRSAKLRVLRKTKSADKKYKKENSKEE. Positions 302–316 are enriched in basic and acidic residues; the sequence is KSADKKYKKENSKEE.

This sequence belongs to the methyltransferase superfamily. RsmH family.

The protein resides in the cytoplasm. The enzyme catalyses cytidine(1402) in 16S rRNA + S-adenosyl-L-methionine = N(4)-methylcytidine(1402) in 16S rRNA + S-adenosyl-L-homocysteine + H(+). Functionally, specifically methylates the N4 position of cytidine in position 1402 (C1402) of 16S rRNA. This Leptospira borgpetersenii serovar Hardjo-bovis (strain JB197) protein is Ribosomal RNA small subunit methyltransferase H.